The chain runs to 181 residues: Ribonuclease M5 (181 aa).

A Toprim domain is found at 3–86 (KEVIVVEGRD…AYISQEEGTK (84 aa)). Glu-9, Asp-55, and Asp-57 together coordinate Mg(2+).

Belongs to the ribonuclease M5 family. Mg(2+) serves as cofactor.

Its subcellular location is the cytoplasm. The catalysed reaction is Endonucleolytic cleavage of RNA, removing 21 and 42 nucleotides, respectively, from the 5'- and 3'-termini of a 5S-rRNA precursor.. In terms of biological role, required for correct processing of both the 5' and 3' ends of 5S rRNA precursor. Cleaves both sides of a double-stranded region yielding mature 5S rRNA in one step. The polypeptide is Ribonuclease M5 (Clostridium botulinum (strain Hall / ATCC 3502 / NCTC 13319 / Type A)).